Reading from the N-terminus, the 90-residue chain is Small ribosomal subunit protein uS15c (90 aa).

This sequence belongs to the universal ribosomal protein uS15 family. As to quaternary structure, part of the 30S ribosomal subunit.

It localises to the plastid. The protein resides in the chloroplast. This Nandina domestica (Heavenly bamboo) protein is Small ribosomal subunit protein uS15c (rps15).